Consider the following 129-residue polypeptide: MRLKVGFQGGGCFRKDALCLEGGVSARWARAPHSAPLRPPRELHAAPPPATPTQTVVRPAGFPRRTRLMVRSAPPTQRPPTGSGCVSGLWRKGLGLRPQTLLRVGSVVLSSAPALRPRLGPCLRPPPSD.

A disordered region spans residues 34–57 (SAPLRPPRELHAAPPPATPTQTVV).

This is an uncharacterized protein from Homo sapiens (Human).